Reading from the N-terminus, the 263-residue chain is Putative hydro-lyase Psyc_1103 (263 aa).

It belongs to the D-glutamate cyclase family.

In Psychrobacter arcticus (strain DSM 17307 / VKM B-2377 / 273-4), this protein is Putative hydro-lyase Psyc_1103.